Here is a 381-residue protein sequence, read N- to C-terminus: Dual-specificity RNA methyltransferase RlmN (381 aa).

E96 acts as the Proton acceptor in catalysis. A Radical SAM core domain is found at 102-342; the sequence is TDDRGTLCVS…TRTTRGDDID (241 aa). A disulfide bridge connects residues C109 and C345. The [4Fe-4S] cluster site is built by C116, C120, and C123. S-adenosyl-L-methionine-binding positions include 170–171, S202, 224–226, and N302; these read GE and SLH. C345 serves as the catalytic S-methylcysteine intermediate.

This sequence belongs to the radical SAM superfamily. RlmN family. The cofactor is [4Fe-4S] cluster.

The protein resides in the cytoplasm. The catalysed reaction is adenosine(2503) in 23S rRNA + 2 reduced [2Fe-2S]-[ferredoxin] + 2 S-adenosyl-L-methionine = 2-methyladenosine(2503) in 23S rRNA + 5'-deoxyadenosine + L-methionine + 2 oxidized [2Fe-2S]-[ferredoxin] + S-adenosyl-L-homocysteine. It catalyses the reaction adenosine(37) in tRNA + 2 reduced [2Fe-2S]-[ferredoxin] + 2 S-adenosyl-L-methionine = 2-methyladenosine(37) in tRNA + 5'-deoxyadenosine + L-methionine + 2 oxidized [2Fe-2S]-[ferredoxin] + S-adenosyl-L-homocysteine. Its function is as follows. Specifically methylates position 2 of adenine 2503 in 23S rRNA and position 2 of adenine 37 in tRNAs. m2A2503 modification seems to play a crucial role in the proofreading step occurring at the peptidyl transferase center and thus would serve to optimize ribosomal fidelity. This is Dual-specificity RNA methyltransferase RlmN from Pseudomonas putida (strain ATCC 700007 / DSM 6899 / JCM 31910 / BCRC 17059 / LMG 24140 / F1).